Reading from the N-terminus, the 1329-residue chain is MAETQTLNFGPEWLRALAGGVGSSIVASPPLSPALPKYKLADYRYGREEMLALYVKDNMIPVDLHDKEFLPILQEEPLPPLALVPFTEEEQRNFSMSVNSAAVLRLTGRGGGTVAGAPRGRSSSRGRGRGRGDGFYQRSFDDVEGGFGRGGREMHRSQSWEERGDRRFEKPGRKDPDGAPAHFPLNHIRANYEDPAAVNARKFIHAECDNWRTTRDELNGEEDDNGWRLAGARRENERWCPPSPDGPRSAGWREHPDQRRRFGFGDEERSGYRRPRSGSGSAEEERDSLPEWCLEDAEEETGTFDSSGAFLSLKVRALEKAPKEPILEEAELDFRPLEENDEYAEKDDSETEQTKDTDTNTRHESDRNEENCKSEEPSPVAVPFSAVVTPPKATTPAPIQPVHLEKAEDKERPSERTTLPEIRHELSKAPLHTALSNSIVEAISIPHVANKLPDLPVPAPSVLPVKSVPPQSQQVKPIEMPVSVPPALLRSTGSVGPISRPSALPSDLDEDEGLKHFEQEAEKMVAYLQDGGVDDERLASKIGPKPSALPITNEAAFKWFYKDPQGEIQGPFNNQEMSEWFQAGYFTMTLQVKRGCDEMFQPLGEMIKLWGRVPFTPGPTLPPILGDADQERMKRQQEINALNMYQLQQMQYQYLLRQQYALQQKVLNSAPPPPPPPQQQLNLLLHQALKIRTPEPQQSLLPPVTRSMSVPDSGSVWEMQNPSTQASCSPNMQPAAPSTWEGSSVWDLPLDNMPQASSIEQLQLEKAKALKLEMERREAELRAKREEEERKRLEEALRARQEEERKRLEEEELARRKQEEALKRQREQEEAQRRKKEEEERLAQEEALRRLEERRREEEERRQREEFLRKQQEEERRKQEELEAQRRREEEKRLEEEAAAAAAALLRQQQEEQKKREQEAQRQQELQRQRQQQQEALRRLQQQQQQQQLAQMKLPSSSKWGQQSTTANSLSQSQNALSLAEIQKLEEERERQTREEQRRQQQELQRVQQQQPQTKLPGWGSVAKQPMATKSLLEIQREEAQQMKQRKDQQQQQQQQQQPPPQPQPQQHSTNTQQNRTQNRAAINTSVWGSVNNVSSNWMMDSSVWGDTQNSNIGFWDEAVKEAAPPQTTRKSHTPKNKGNANLSNSSSGKASKKVEEEEKLLKLFQGANKNQDGFMQWCEQTLHTLNTANNLDVPTFASFLKEVDSPYEVHDYVRAYLGDTPQAKDFAKQFLERRAKQNDNQQKPQQGQQQKQQESVWGIREVPQSVLLQQQQQQQLQQQQQQRFETVTSGKKKKKQKMVRADPSLLGFSVNASSERLNMGEIETVEDF.

Disordered regions lie at residues 109-184 (RGGG…AHFP) and 236-419 (NERW…RTTL). Composition is skewed to basic and acidic residues over residues 150 to 177 (GGRE…KDPD) and 251 to 271 (GWRE…ERSG). Residues 293-302 (CLEDAEEETG) show a composition bias toward acidic residues. Over residues 316-338 (RALEKAPKEPILEEAELDFRPLE) the composition is skewed to basic and acidic residues. Residues 339–351 (ENDEYAEKDDSET) show a composition bias toward acidic residues. Over residues 352–376 (EQTKDTDTNTRHESDRNEENCKSEE) the composition is skewed to basic and acidic residues. The span at 377–397 (PSPVAVPFSAVVTPPKATTPA) shows a compositional bias: low complexity. The segment covering 403–415 (HLEKAEDKERPSE) has biased composition (basic and acidic residues). Positions 556-604 (AFKWFYKDPQGEIQGPFNNQEMSEWFQAGYFTMTLQVKRGCDEMFQPLG) constitute a GYF domain. Polar residues predominate over residues 720–732 (QNPSTQASCSPNM). 5 disordered regions span residues 720-740 (QNPS…PSTW), 781-1081 (LRAK…QNRA), 1122-1155 (EAAP…SKKV), 1236-1256 (AKQN…QQES), and 1279-1302 (QQQQ…MVRA). Residues 781–896 (LRAKREEEER…RREEEKRLEE (116 aa)) are compositionally biased toward basic and acidic residues. Residues 899 to 908 (AAAAAALLRQ) are compositionally biased toward low complexity. Residues 909-928 (QQEEQKKREQEAQRQQELQR) show a composition bias toward basic and acidic residues. A compositionally biased stretch (low complexity) spans 929–951 (QRQQQQEALRRLQQQQQQQQLAQ). Polar residues predominate over residues 954-966 (LPSSSKWGQQSTT). Positions 967 to 980 (ANSLSQSQNALSLA) are enriched in low complexity. The span at 983-1001 (QKLEEERERQTREEQRRQQ) shows a compositional bias: basic and acidic residues. The segment covering 1002–1013 (QELQRVQQQQPQ) has biased composition (low complexity). Basic and acidic residues predominate over residues 1035–1049 (IQREEAQQMKQRKDQ). The segment covering 1068 to 1081 (HSTNTQQNRTQNRA) has biased composition (polar residues). Residues 1239–1254 (NDNQQKPQQGQQQKQQ) are compositionally biased toward low complexity.

Belongs to the GIGYF family. In terms of assembly, component of the 4EHP-GYF2 complex.

In terms of biological role, key component of the 4EHP-GYF2 complex, a multiprotein complex that acts as a repressor of translation initiation. In association with EIF4E2, assists ribosome-associated quality control (RQC) by sequestering the mRNA cap, blocking ribosome initiation and decreasing the translational load on problematic messages. The chain is GRB10-interacting GYF protein 2 (gigyf2) from Danio rerio (Zebrafish).